Reading from the N-terminus, the 1936-residue chain is Potassium channel K1 (1936 aa).

6 helical membrane passes run 175 to 195 (IIIL…YILL), 598 to 618 (VWII…LWAA), 643 to 663 (GYIE…GLYF), 670 to 690 (YIFS…SFIM), 701 to 721 (TYWF…AEST), and 734 to 754 (IIII…SGIM). An intramembrane region (pore-forming) is located at residues 772-788 (FVYFGVITMSTVGYGDY). A helical membrane pass occupies residues 791-811 (VTPAGKCLTMFIIVTCFTFVG). Residues 1141–1185 (DTSSMINYKSKSRVNYKMVKGTKNEFIRNQNYNINSIYYANNDNM) are a coiled coil.

The protein localises to the membrane. It carries out the reaction K(+)(in) = K(+)(out). Partially inhibited by Ba(2+) and quinine. Probably insensitive to tetraethylammonium (TEA). Likely a predominant potassium channel in the erythrocytic stages of parasites. Mediates transmembrane potassium transport. Required for the development of oocysts in the mosquito midgut. This is Potassium channel K1 from Plasmodium berghei (strain Anka).